Reading from the N-terminus, the 104-residue chain is DNA-directed RNA polymerase subunit omega (104 aa).

This sequence belongs to the RNA polymerase subunit omega family. In terms of assembly, the RNAP catalytic core consists of 2 alpha, 1 beta, 1 beta' and 1 omega subunit. When a sigma factor is associated with the core the holoenzyme is formed, which can initiate transcription.

It catalyses the reaction RNA(n) + a ribonucleoside 5'-triphosphate = RNA(n+1) + diphosphate. Functionally, promotes RNA polymerase assembly. Latches the N- and C-terminal regions of the beta' subunit thereby facilitating its interaction with the beta and alpha subunits. This chain is DNA-directed RNA polymerase subunit omega (rpoZ), found in Streptococcus pyogenes serotype M1.